A 280-amino-acid polypeptide reads, in one-letter code: Phosphatidylserine decarboxylase proenzyme (280 aa).

Residues D88, H144, and S247 each act as charge relay system; for autoendoproteolytic cleavage activity in the active site. S247 acts as the Schiff-base intermediate with substrate; via pyruvic acid; for decarboxylase activity in catalysis. A Pyruvic acid (Ser); by autocatalysis modification is found at S247.

The protein belongs to the phosphatidylserine decarboxylase family. PSD-B subfamily. Prokaryotic type I sub-subfamily. Heterodimer of a large membrane-associated beta subunit and a small pyruvoyl-containing alpha subunit. Pyruvate serves as cofactor. Post-translationally, is synthesized initially as an inactive proenzyme. Formation of the active enzyme involves a self-maturation process in which the active site pyruvoyl group is generated from an internal serine residue via an autocatalytic post-translational modification. Two non-identical subunits are generated from the proenzyme in this reaction, and the pyruvate is formed at the N-terminus of the alpha chain, which is derived from the carboxyl end of the proenzyme. The autoendoproteolytic cleavage occurs by a canonical serine protease mechanism, in which the side chain hydroxyl group of the serine supplies its oxygen atom to form the C-terminus of the beta chain, while the remainder of the serine residue undergoes an oxidative deamination to produce ammonia and the pyruvoyl prosthetic group on the alpha chain. During this reaction, the Ser that is part of the protease active site of the proenzyme becomes the pyruvoyl prosthetic group, which constitutes an essential element of the active site of the mature decarboxylase.

It is found in the cell membrane. The enzyme catalyses a 1,2-diacyl-sn-glycero-3-phospho-L-serine + H(+) = a 1,2-diacyl-sn-glycero-3-phosphoethanolamine + CO2. The protein operates within phospholipid metabolism; phosphatidylethanolamine biosynthesis; phosphatidylethanolamine from CDP-diacylglycerol: step 2/2. Functionally, catalyzes the formation of phosphatidylethanolamine (PtdEtn) from phosphatidylserine (PtdSer). The polypeptide is Phosphatidylserine decarboxylase proenzyme (Stenotrophomonas maltophilia (strain R551-3)).